The chain runs to 294 residues: Eukaryotic translation initiation factor 3 subunit G (294 aa).

2 disordered regions span residues 1–43 (MPSA…ENKI) and 160–211 (EDDG…RDET). Residues 194–211 (GANRRGETMPSRSQRDET) show a composition bias toward basic and acidic residues. In terms of domain architecture, RRM spans 212–290 (ATIRVTNLSE…LILNVEWAKP (79 aa)).

It belongs to the eIF-3 subunit G family. As to quaternary structure, component of the eukaryotic translation initiation factor 3 (eIF-3) complex.

It is found in the cytoplasm. Its function is as follows. RNA-binding component of the eukaryotic translation initiation factor 3 (eIF-3) complex, which is involved in protein synthesis of a specialized repertoire of mRNAs and, together with other initiation factors, stimulates binding of mRNA and methionyl-tRNAi to the 40S ribosome. The eIF-3 complex specifically targets and initiates translation of a subset of mRNAs involved in cell proliferation. This subunit can bind 18S rRNA. This Nematostella vectensis (Starlet sea anemone) protein is Eukaryotic translation initiation factor 3 subunit G.